The primary structure comprises 478 residues: DNA-directed RNA polymerase II subunit RPB1 (478 aa).

7 residues coordinate Zn(2+): C68, C71, C78, H81, C108, C111, and C149. Mg(2+) contacts are provided by D474 and D476.

This sequence belongs to the RNA polymerase beta' chain family. Component of the RNA polymerase II (Pol II) complex consisting of 12 subunits. Post-translationally, phosphorylation activates POL II.

The protein resides in the nucleus. It carries out the reaction RNA(n) + a ribonucleoside 5'-triphosphate = RNA(n+1) + diphosphate. Its function is as follows. DNA-dependent RNA polymerase catalyzes the transcription of DNA into RNA using the four ribonucleoside triphosphates as substrates. Largest and catalytic component of RNA polymerase II which synthesizes mRNA precursors and many functional non-coding RNAs. Forms the polymerase active center together with the second largest subunit. Pol II is the central component of the basal RNA polymerase II transcription machinery. It is composed of mobile elements that move relative to each other. RPB1 is part of the core element with the central large cleft, the clamp element that moves to open and close the cleft and the jaws that are thought to grab the incoming DNA template. At the start of transcription, a single-stranded DNA template strand of the promoter is positioned within the central active site cleft of Pol II. A bridging helix emanates from RPB1 and crosses the cleft near the catalytic site and is thought to promote translocation of Pol II by acting as a ratchet that moves the RNA-DNA hybrid through the active site by switching from straight to bent conformations at each step of nucleotide addition. During transcription elongation, Pol II moves on the template as the transcript elongates. Elongation is influenced by the phosphorylation status of the C-terminal domain (CTD) of Pol II largest subunit (RPB1), which serves as a platform for assembly of factors that regulate transcription initiation, elongation, termination and mRNA processing. This chain is DNA-directed RNA polymerase II subunit RPB1 (RPB1), found in Euplotoides octocarinatus (Freshwater ciliate).